Reading from the N-terminus, the 338-residue chain is Mitochondrial genome maintenance exonuclease 1 (338 aa).

The transit peptide at 1–64 (MKLPLTFCRL…RSVLSRGPAQ (64 aa)) directs the protein to the mitochondrion. Catalysis depends on residues Asp-235, Asp-248, and Lys-250.

Belongs to the MGME1 family.

The protein resides in the mitochondrion. Functionally, metal-dependent single-stranded DNA (ssDNA) exonuclease involved in mitochondrial genome maintenance. Has preference for 5'-3' exonuclease activity but is also capable of endonuclease activity on linear substrates. Necessary for maintenance of proper 7S DNA levels. Probably involved in mitochondrial DNA (mtDNA) repair, possibly via the processing of displaced DNA containing Okazaki fragments during RNA-primed DNA synthesis on the lagging strand or via processing of DNA flaps during long-patch base excision repair. Specifically binds 5-hydroxymethylcytosine (5hmC)-containing DNA in stem cells. This chain is Mitochondrial genome maintenance exonuclease 1 (Mgme1), found in Mus musculus (Mouse).